A 441-amino-acid polypeptide reads, in one-letter code: Cysteine proteinase (441 aa).

C249 and C290 are oxidised to a cystine. C252 is a catalytic residue. N-linked (GlcNAc...) asparagine glycans are attached at residues N270 and N345. Catalysis depends on residues H381 and N403.

This sequence belongs to the peptidase C1 family.

This Theileria annulata protein is Cysteine proteinase (TACP).